The chain runs to 628 residues: Probable potassium transport system protein Kup (628 aa).

Transmembrane regions (helical) follow at residues 15–35 (LAIA…LYSL), 55–75 (VISL…VLFV), 104–124 (AGLL…DAVI), 142–162 (PHLS…LFWI), 173–193 (LFGP…LWHI), 210–230 (TFMA…VLVL), 252–272 (WYVL…ALLM), 281–301 (PFFL…STIA), 342–362 (IYVP…VIAF), 372–392 (YGIA…VVMV), 400–420 (LLVA…FGAN), and 426–446 (EGGW…MTWY).

It belongs to the HAK/KUP transporter (TC 2.A.72) family.

The protein localises to the cell inner membrane. The catalysed reaction is K(+)(in) + H(+)(in) = K(+)(out) + H(+)(out). Its function is as follows. Transport of potassium into the cell. Likely operates as a K(+):H(+) symporter. The polypeptide is Probable potassium transport system protein Kup (Paraburkholderia xenovorans (strain LB400)).